Reading from the N-terminus, the 272-residue chain is NH(3)-dependent NAD(+) synthetase (272 aa).

Tyrosine 33 provides a ligand contact to deamido-NAD(+). ATP is bound by residues 45–52 (GISGGQDS), arginine 79, and glutamine 85. Aspartate 51 is a binding site for Mg(2+). Residue arginine 138 coordinates deamido-NAD(+). Threonine 158 is an ATP binding site. Position 163 (glutamate 163) interacts with Mg(2+). Deamido-NAD(+) is bound by residues lysine 171 and aspartate 178. Residues lysine 187 and threonine 209 each contribute to the ATP site. Deamido-NAD(+) is bound by residues glutamate 224 and 258 to 259 (HK).

Belongs to the NAD synthetase family. In terms of assembly, homodimer. In terms of processing, phosphorylated during sporulation.

The catalysed reaction is deamido-NAD(+) + NH4(+) + ATP = AMP + diphosphate + NAD(+) + H(+). The protein operates within cofactor biosynthesis; NAD(+) biosynthesis; NAD(+) from deamido-NAD(+) (ammonia route): step 1/1. Catalyzes the ATP-dependent amidation of deamido-NAD to form NAD. Uses ammonia as a nitrogen source. This is NH(3)-dependent NAD(+) synthetase from Bacillus subtilis (strain 168).